The chain runs to 142 residues: uncharacterized protein (142 aa).

The region spanning 1–120 is the N-acetyltransferase domain; sequence MADKFDANDE…TILKWEKNMD (120 aa).

Belongs to the acetyltransferase family.

This is an uncharacterized protein from Streptococcus pyogenes serotype M1.